A 148-amino-acid chain; its full sequence is ATP synthase epsilon chain (148 aa).

Belongs to the ATPase epsilon chain family. As to quaternary structure, F-type ATPases have 2 components, CF(1) - the catalytic core - and CF(0) - the membrane proton channel. CF(1) has five subunits: alpha(3), beta(3), gamma(1), delta(1), epsilon(1). CF(0) has three main subunits: a, b and c.

The protein resides in the cell membrane. In terms of biological role, produces ATP from ADP in the presence of a proton gradient across the membrane. The polypeptide is ATP synthase epsilon chain (Streptococcus thermophilus (strain ATCC BAA-250 / LMG 18311)).